The chain runs to 344 residues: Mitochondrial mRNA pseudouridine synthase Rpusd3 (344 aa).

The transit peptide at 1 to 36 directs the protein to the mitochondrion; that stretch reads MGALRVLRYVSMIWRPELGSCARQRDAGFGTEARRP. The disordered stretch occupies residues 25–53; sequence RDAGFGTEARRPSQPHRSSKHKDLVEDQP.

This sequence belongs to the pseudouridine synthase RluA family. In terms of assembly, forms a regulatory protein-RNA complex, consisting of RCC1L, NGRN, RPUSD3, RPUSD4, TRUB2, FASTKD2 and 16S mt-rRNA.

The protein resides in the mitochondrion matrix. It catalyses the reaction a uridine in mRNA = a pseudouridine in mRNA. Catalyzes uridine to pseudouridine isomerization (pseudouridylation) of specific mitochondrial mRNAs (mt-mRNAs), a post-transcriptional modification necessary for their translation. Acts at position 390 in COXI mt-mRNA and at position 697-699 in mitochondrial COXIII mt-mRNA. As a component of a functional protein-RNA module, consisting of RCC1L, NGRN, RPUSD3, RPUSD4, TRUB2, FASTKD2 and 16S mitochondrial ribosomal RNA (16S mt-rRNA), controls 16S mt-rRNA abundance and may play a role in mitochondrial ribosome biogenesis. This is Mitochondrial mRNA pseudouridine synthase Rpusd3 (Rpusd3) from Mus musculus (Mouse).